The primary structure comprises 315 residues: Outer membrane protease IcsP (315 aa).

Residues 1-20 (MKLKFFVLALCVPAIFTTHA) form the signal peptide. Residues Asp103, Asp105, Asp230, and His232 contribute to the active site.

It belongs to the peptidase A26 family.

The protein resides in the cell outer membrane. In terms of biological role, protease responsible for the cleavage of IcsA between 'Arg-758' and 'Arg-759', removing the entire alpha domain from IscA localized on the bacterial surface. This proteolytic activity contributes to the maintenance of a tight polar cap of IcsA, which is important to Shigella actin-based motility. The polypeptide is Outer membrane protease IcsP (icsP) (Shigella flexneri).